A 575-amino-acid chain; its full sequence is Cyclic nucleotide-gated channel alpha-4 (575 aa).

Residues 1–38 are Cytoplasmic-facing; sequence MSQDGKVKTTESTPPAPTKARKWLPVLDPSGDYYYWWL. A helical transmembrane segment spans residues 39-60; it reads NTMVFPIMYNLIIVVCRACFPD. At 61–70 the chain is on the extracellular side; the sequence is LQHSYLVAWF. A helical membrane pass occupies residues 71 to 91; it reads VLDYTSDLLYLLDIGVRFHTG. Over 92–116 the chain is Cytoplasmic; it reads FLEQGILVVDKGMIASRYVRTWSFL. Residues 117 to 135 traverse the membrane as a helical segment; it reads LDLASLVPTDAAYVQLGPH. Topologically, residues 136 to 140 are extracellular; that stretch reads IPTLR. A helical membrane pass occupies residues 141–159; that stretch reads LNRFLRVPRLFEAFDRTET. The Cytoplasmic segment spans residues 160 to 166; sequence RTAYPNA. The segment at 164-272 is ion conduction pathway; the sequence is PNAFRIAKLM…GSMSSVIYNM (109 aa). The helical transmembrane segment at 167-190 threads the bilayer; it reads FRIAKLMLYIFVVIHWNSCLYFAL. The Extracellular portion of the chain corresponds to 191–213; that stretch reads SRYLGFGRDAWVYPDPAQPGFER. The next 2 helical transmembrane spans lie at 214-248 and 249-273; these read LRRQYLYSFYFSTLILTTVGDTPLPDREEEYLFMV and GDFLLAVMGFATIMGSMSSVIYNMN. A selectivity filter region spans residues 231–234; that stretch reads TVGD. The segment at 274–350 is C-linker; that stretch reads TADAAFYPDH…STLSRVQIFQ (77 aa). Residues 274–575 lie on the Cytoplasmic side of the membrane; the sequence is TADAAFYPDH…AGQAGPSGIE (302 aa). The short motif at 292 to 302 is the IQ-type element; sequence LQHVNKRLERR. A nucleoside 3',5'-cyclic phosphate is bound at residue 348-471; it reads IFQNCEASLL…AVMEEKGREI (124 aa). Residues 354-474 are cyclic nucleotide-binding domain; that stretch reads ASLLEELVLK…EEKGREILLK (121 aa). 3',5'-cyclic GMP is bound by residues G414, S417, R430, and T431. Residues R430 and T431 each contribute to the 3',5'-cyclic AMP site. Positions 493-547 form a coiled coil; the sequence is TESRLKGLDQQLDDLQTKFARLLAELESSALKIAYRIERLEWQTREWPMPEDMGE. Residues 537–575 are disordered; the sequence is REWPMPEDMGEADDEAEPGEGTSKDGEGKAGQAGPSGIE. Residues 544 to 554 show a composition bias toward acidic residues; sequence DMGEADDEAEP.

Belongs to the cyclic nucleotide-gated cation channel (TC 1.A.1.5) family. CNGA4 subfamily. As to quaternary structure, the olfactory cyclic nucleotide-gated channel is an heterotetramer composed of CNGA2, CNGA4 and CNGB1b subunits with 2:1:1 stoichiometry. May form homomeric channels gated by nitric oxide. In terms of processing, N-glycosylated. As to expression, olfactory neurons. Expressed in olfactory sensory cilia (at protein level).

Its subcellular location is the cell projection. The protein localises to the cilium membrane. It catalyses the reaction Ca(2+)(in) = Ca(2+)(out). It carries out the reaction Na(+)(in) = Na(+)(out). The enzyme catalyses K(+)(in) = K(+)(out). The catalysed reaction is NH4(+)(in) = NH4(+)(out). It catalyses the reaction Rb(+)(in) = Rb(+)(out). It carries out the reaction Li(+)(in) = Li(+)(out). The enzyme catalyses Cs(+)(in) = Cs(+)(out). With respect to regulation, ca(2+)-calmodulin exerts its inhibitory effect in cAMP sensitivity by binding to IQ-like motif of CNGA4 and preferably binds to the channel in the closed state. Inhibition by PIP3 of the CNG channel probably occurs via CGNA2 binding. Ca(2+) currents are inhibited by pimozide, an L-type Ca(2+) channel blocker. Pore-forming subunit of the olfactory cyclic nucleotide-gated channel. Operates in the cilia of olfactory sensory neurons where chemical stimulation of the odorant is converted to an electrical signal. Mediates odorant-induced cAMP-dependent Ca(2+) influx triggering neuron depolarization. The rise of intracellular Ca(2+) levels potentiates the olfactory response by activating Ca(2+)-dependent Cl(-) channels, but it also serves as a negative feedback signal to desensitize the channel for rapid adaptation to odorants. Conducts cAMP- and cGMP-gated ion currents, with permeability for monovalent and divalent cations. May conduct nitric oxide-gated Ca(2+) currents relevant to neurons of vomeronasal organ, a system involved in the perception of pheromones. The sequence is that of Cyclic nucleotide-gated channel alpha-4 from Rattus norvegicus (Rat).